Here is a 263-residue protein sequence, read N- to C-terminus: 4-hydroxy-tetrahydrodipicolinate reductase (263 aa).

Residues 7 to 12, 96 to 98, and 122 to 125 each bind NAD(+); these read GFKGRM, GTT, and APNF. Histidine 152 (proton donor/acceptor) is an active-site residue. Histidine 153 contributes to the (S)-2,3,4,5-tetrahydrodipicolinate binding site. The active-site Proton donor is lysine 156. 162–163 is a (S)-2,3,4,5-tetrahydrodipicolinate binding site; sequence GT.

It belongs to the DapB family.

It localises to the cytoplasm. It carries out the reaction (S)-2,3,4,5-tetrahydrodipicolinate + NAD(+) + H2O = (2S,4S)-4-hydroxy-2,3,4,5-tetrahydrodipicolinate + NADH + H(+). The enzyme catalyses (S)-2,3,4,5-tetrahydrodipicolinate + NADP(+) + H2O = (2S,4S)-4-hydroxy-2,3,4,5-tetrahydrodipicolinate + NADPH + H(+). The protein operates within amino-acid biosynthesis; L-lysine biosynthesis via DAP pathway; (S)-tetrahydrodipicolinate from L-aspartate: step 4/4. Catalyzes the conversion of 4-hydroxy-tetrahydrodipicolinate (HTPA) to tetrahydrodipicolinate. The sequence is that of 4-hydroxy-tetrahydrodipicolinate reductase from Listeria monocytogenes serotype 4b (strain F2365).